A 1073-amino-acid chain; its full sequence is TSC22 domain family protein 1 (1073 aa).

The segment at 1-98 (MHQPPESTAA…SQAQLQAQPL (98 aa)) is required for interaction with TGFBR1 and promotion of TGF-beta signaling. 6 disordered regions span residues 22–110 (MAHP…KKSG), 125–205 (ISSN…PHLP), 220–288 (LHHH…SPAS), 458–486 (VTSE…SVGS), 607–628 (YSQA…QQLQ), and 742–766 (VQQP…QVVP). Over residues 36-45 (GSASALNAAG) the composition is skewed to low complexity. Positions 58–70 (FPPPSLLQPPPPA) are enriched in pro residues. Positions 84-100 (SLNLLSQAQLQAQPLAP) are enriched in low complexity. Over residues 133-142 (EDTESYDDLD) the composition is skewed to acidic residues. Residues 220-240 (LHHHHQIHHGHHLQHGHHHPS) are compositionally biased toward basic residues. The span at 257–271 (PVSRKLSTTGSSDSI) shows a compositional bias: polar residues. Position 263 is a phosphoserine (S263). 2 stretches are compositionally biased toward low complexity: residues 272 to 288 (TPVA…SPAS) and 465 to 483 (TSGS…YTES). Pro residues predominate over residues 614–625 (VQTPLPGAPPPQ). A compositionally biased stretch (polar residues) spans 742-764 (VQQPSTQVPPSVIQQGAPPSSQV). The segment at 1006-1027 (LKEQIKELIEKNSQLEQENNLL) is leucine-zipper. Positions 1037–1073 (AQFQAQLQTGSPPATTQPQGTTQPPAQPASQGSGPTA) are disordered. Positions 1044–1073 (QTGSPPATTQPQGTTQPPAQPASQGSGPTA) are enriched in low complexity.

This sequence belongs to the TSC-22/Dip/Bun family. Forms homodimers. Forms heterodimers. Component of a complex composed of TSC22D1 (via N-terminus), TGFBR1 and TGFBR2; the interaction between TSC22D1 and TGFBR1 is inhibited by SMAD7 and promoted by TGFB1. Interacts with SMAD7; the interaction requires TGF-beta and the interaction is inhibited by TGFBR1. Interacts with TPT1/fortilin; interaction results in the destabilization of TSC22D1 protein and prevents TSC22D1-mediated apoptosis. Interacts with SMAD4 (via N-terminus). Interacts with ACVRL1/ALK1, ACVR1/ALK2, BMPR1A/ALK3, ACVR1B/ALK4, BMPR1B/ALK6, ACVR2A/ACTRII, and BMPR2. Interacts with SMAD6. Interacts with TFE3; the interaction is enhanced in the presence of TGF-beta. In terms of assembly, forms a heterodimer with TSC22D4/THG1. As to quaternary structure, forms a heterodimer with TSC22D4/THG1. Interacts with histone H1-2. Interacts with GNL3. Interacts with histone H1-2. Ubiquitously expressed in adult tissues. Expressed in the postmitotic epithelial compartment at the top of intestinal mucosal villi.

It localises to the cytoplasm. It is found in the nucleus. The protein resides in the cell membrane. The protein localises to the mitochondrion. Transcriptional repressor. Acts on the C-type natriuretic peptide (CNP) promoter. Acts to promote CASP3-mediated apoptosis. Positively regulates TGF-beta signaling by interacting with SMAD7 which inhibits binding of SMAD7 to TGFBR1, preventing recruitment of SMURF ubiquitin ligases to TGFBR1 and inhibiting SMURF-mediated ubiquitination and degradation of TGFBR1. Contributes to enhancement of TGF-beta signaling by binding to and modulating the transcription activator activity of SMAD4. Promotes TGF-beta-induced transcription of COL1A2; via its interaction with TFE3 at E-boxes in the gene proximal promoter. Plays a role in the repression of hematopoietic precursor cell growth. Promotes IL2 deprivation-induced apoptosis in T-lymphocytes, via repression of TSC22D3/GILZ transcription and activation of the caspase cascade. In terms of biological role, may act to negatively regulate TGFB3 signaling and thereby inhibit cell death in mammary gland cells. Functionally, positively regulates cell death in response to TGFB3 during mammary gland involution. The protein is TSC22 domain family protein 1 of Homo sapiens (Human).